The following is an 816-amino-acid chain: Probable disease resistance protein At4g33300 (816 aa).

The RPW8 domain maps to 1–149 (MAITDFFAGE…SLDRVIQQVG (149 aa)). Residues 95-111 (TLARKMEKLEKTISNFL) are a coiled coil. Positions 191-443 (VKKMMFESQG…LDVLINIWIE (253 aa)) constitute an NB-ARC domain. Residue 207–214 (GMGGVGKT) participates in ATP binding. Positions 399 to 415 (SRLLRQMEASLDNLDQT) form a coiled coil. LRR repeat units follow at residues 681–704 (SLSC…SKLQ), 705–727 (ALEI…ICEL), 729–751 (GLKY…IGKL), and 753–774 (KLEK…AVSL).

The protein belongs to the disease resistance NB-LRR family.

Its function is as follows. Probable disease resistance protein. The protein is Probable disease resistance protein At4g33300 of Arabidopsis thaliana (Mouse-ear cress).